The sequence spans 413 residues: Argininosuccinate synthase (413 aa).

Residues 12 to 20 (AYSGGLDTS) and A39 each bind ATP. L-citrulline-binding residues include Y92 and S97. Residue G122 coordinates ATP. T124, N128, and D129 together coordinate L-aspartate. N128 contributes to the L-citrulline binding site. L-citrulline is bound by residues R132, S189, S198, E274, and Y286.

Belongs to the argininosuccinate synthase family. Type 1 subfamily. Homotetramer.

The protein localises to the cytoplasm. The enzyme catalyses L-citrulline + L-aspartate + ATP = 2-(N(omega)-L-arginino)succinate + AMP + diphosphate + H(+). Its pathway is amino-acid biosynthesis; L-arginine biosynthesis; L-arginine from L-ornithine and carbamoyl phosphate: step 2/3. The chain is Argininosuccinate synthase from Aliarcobacter butzleri (strain RM4018) (Arcobacter butzleri).